Consider the following 752-residue polypeptide: Zinc finger protein 184 (752 aa).

The region spanning 28–99 (VTFKDVIVDF…EPSIPVGTPG (72 aa)) is the KRAB domain. A phosphoserine mark is found at serine 117, serine 122, and serine 200. Lysine 207 is covalently cross-linked (Glycyl lysine isopeptide (Lys-Gly) (interchain with G-Cter in SUMO2)). 19 C2H2-type zinc fingers span residues 223-245 (CKCN…QRTH), 251-273 (YKCN…QRIH), 279-301 (YKCD…QRIH), 307-329 (YKCD…QRIH), 335-357 (YTCN…QKIH), 363-385 (FKCD…QKIH), 391-413 (YKCN…HMIH), 419-441 (YECN…QKTH), 447-469 (YDCA…LKIH), 475-497 (YKCN…RRIH), 503-525 (FECS…QKTH), 531-553 (YECK…ERIH), 559-581 (YQCH…RKIH), 587-609 (YKCN…KRIH), 615-637 (YECA…QKTH), 643-665 (YHCN…QRIH), 671-693 (YKCN…QNTH), 699-721 (YNCN…QRIH), and 727-749 (FGCN…QRLH).

The protein belongs to the krueppel C2H2-type zinc-finger protein family.

It is found in the nucleus. In terms of biological role, may be involved in transcriptional regulation. The protein is Zinc finger protein 184 (ZNF184) of Bos taurus (Bovine).